The following is a 212-amino-acid chain: Ribosomal RNA small subunit methyltransferase G (212 aa).

S-adenosyl-L-methionine contacts are provided by residues Gly80, Leu85, 131–132 (AE), and Arg146.

The protein belongs to the methyltransferase superfamily. RNA methyltransferase RsmG family.

The protein resides in the cytoplasm. The catalysed reaction is guanosine(527) in 16S rRNA + S-adenosyl-L-methionine = N(7)-methylguanosine(527) in 16S rRNA + S-adenosyl-L-homocysteine. Its function is as follows. Specifically methylates the N7 position of guanine in position 527 of 16S rRNA. The chain is Ribosomal RNA small subunit methyltransferase G from Xanthomonas euvesicatoria pv. vesicatoria (strain 85-10) (Xanthomonas campestris pv. vesicatoria).